We begin with the raw amino-acid sequence, 200 residues long: Glycerol-3-phosphate acyltransferase (200 aa).

The next 5 membrane-spanning stretches (helical) occupy residues 3–23 (YIYSIFIGYFFGAIPFSFFIA), 50–70 (FYGALAFFFDIFKAYIAVFLV), 75–95 (IKFMLIAGTMAVLGHCYSIFL), 109–129 (VFLAVYPWSGLVFFGVWLFIV), and 134–154 (YVSLASMIGLIFASIFVFFAG).

The protein belongs to the PlsY family. As to quaternary structure, probably interacts with PlsX.

It localises to the cell inner membrane. The catalysed reaction is an acyl phosphate + sn-glycerol 3-phosphate = a 1-acyl-sn-glycero-3-phosphate + phosphate. It participates in lipid metabolism; phospholipid metabolism. Its function is as follows. Catalyzes the transfer of an acyl group from acyl-phosphate (acyl-PO(4)) to glycerol-3-phosphate (G3P) to form lysophosphatidic acid (LPA). This enzyme utilizes acyl-phosphate as fatty acyl donor, but not acyl-CoA or acyl-ACP. This is Glycerol-3-phosphate acyltransferase from Thermosipho melanesiensis (strain DSM 12029 / CIP 104789 / BI429).